Reading from the N-terminus, the 265-residue chain is GTP cyclohydrolase FolE2 (265 aa).

This sequence belongs to the GTP cyclohydrolase IV family.

The enzyme catalyses GTP + H2O = 7,8-dihydroneopterin 3'-triphosphate + formate + H(+). The protein operates within cofactor biosynthesis; 7,8-dihydroneopterin triphosphate biosynthesis; 7,8-dihydroneopterin triphosphate from GTP: step 1/1. In terms of biological role, converts GTP to 7,8-dihydroneopterin triphosphate. This Bordetella petrii (strain ATCC BAA-461 / DSM 12804 / CCUG 43448) protein is GTP cyclohydrolase FolE2.